A 142-amino-acid polypeptide reads, in one-letter code: Large ribosomal subunit protein uL13 (142 aa).

The protein belongs to the universal ribosomal protein uL13 family. As to quaternary structure, part of the 50S ribosomal subunit.

In terms of biological role, this protein is one of the early assembly proteins of the 50S ribosomal subunit, although it is not seen to bind rRNA by itself. It is important during the early stages of 50S assembly. The sequence is that of Large ribosomal subunit protein uL13 from Haemophilus influenzae (strain PittGG).